The chain runs to 249 residues: Neurotrophic factor BDNF precursor form (249 aa).

The signal sequence occupies residues 1–18 (MTILFLTMVISYFGCMKA). Residues 19–130 (APMKEVNVHG…AANMSMRVRR (112 aa)) constitute a propeptide that is removed on maturation. Asn-123 carries an N-linked (GlcNAc...) asparagine glycan. Disulfide bonds link Cys-143–Cys-210, Cys-188–Cys-239, and Cys-198–Cys-241.

It belongs to the NGF-beta family. As to quaternary structure, monomers and homodimers. Binds to NTRK2/TRKB. Can form heterodimers with other neurotrophin family members, such as NTF3 and NTF4 (in vitro), but the physiological relevance of this is not clear. BDNF precursor form: interacts with the heterodimer formed by NGFR and SORCS2. Mature BDNF has much lower affinity for the heterodimer formed by NGFR and SORCS2. N-glycosylated and glycosulfated, contrary to mature BDNF. In terms of processing, mature BDNF is produced by proteolytic removal of the propeptide, catalyzed by a FURIN family member. In addition, the precursor form is proteolytically cleaved within the propeptide, but this is not an obligatory intermediate for the production of mature BDNF. Can be converted into mature BDNF by plasmin (PLG). Expressed in the dorsal root ganglion and the spinal cord (at protein level). Detected in brain, especially in brain cortex, hippocampus, midbrain and cerebellum.

Its subcellular location is the secreted. Functionally, important signaling molecule that activates signaling cascades downstream of NTRK2. During development, promotes the survival and differentiation of selected neuronal populations of the peripheral and central nervous systems. Participates in axonal growth, pathfinding and in the modulation of dendritic growth and morphology. Major regulator of synaptic transmission and plasticity at adult synapses in many regions of the CNS. The versatility of BDNF is emphasized by its contribution to a range of adaptive neuronal responses including long-term potentiation (LTP), long-term depression (LTD), certain forms of short-term synaptic plasticity, as well as homeostatic regulation of intrinsic neuronal excitability. Its function is as follows. Important signaling molecule that activates signaling cascades downstream of NTRK2. Activates signaling cascades via the heterodimeric receptor formed by NGFR and SORCS2. Signaling via NGFR and SORCS2 plays a role in synaptic plasticity and long-term depression (LTD). Binding to NGFR and SORCS2 promotes neuronal apoptosis. Promotes neuronal growth cone collapse. This chain is Neurotrophic factor BDNF precursor form (Bdnf), found in Mus musculus (Mouse).